Here is a 293-residue protein sequence, read N- to C-terminus: Formamidopyrimidine-DNA glycosylase (293 aa).

P2 functions as the Schiff-base intermediate with DNA in the catalytic mechanism. E3 functions as the Proton donor in the catalytic mechanism. The Proton donor; for beta-elimination activity role is filled by K58. DNA contacts are provided by H104, R123, and K166. An FPG-type zinc finger spans residues 257-293 (QVYDREGEPCRTDGCEGVVKRFVQNGRSTFWCPKCQR). The active-site Proton donor; for delta-elimination activity is R283.

It belongs to the FPG family. As to quaternary structure, monomer. It depends on Zn(2+) as a cofactor.

It carries out the reaction Hydrolysis of DNA containing ring-opened 7-methylguanine residues, releasing 2,6-diamino-4-hydroxy-5-(N-methyl)formamidopyrimidine.. The catalysed reaction is 2'-deoxyribonucleotide-(2'-deoxyribose 5'-phosphate)-2'-deoxyribonucleotide-DNA = a 3'-end 2'-deoxyribonucleotide-(2,3-dehydro-2,3-deoxyribose 5'-phosphate)-DNA + a 5'-end 5'-phospho-2'-deoxyribonucleoside-DNA + H(+). In terms of biological role, involved in base excision repair of DNA damaged by oxidation or by mutagenic agents. Acts as a DNA glycosylase that recognizes and removes damaged bases. Has a preference for oxidized purines, such as 7,8-dihydro-8-oxoguanine (8-oxoG). Has AP (apurinic/apyrimidinic) lyase activity and introduces nicks in the DNA strand. Cleaves the DNA backbone by beta-delta elimination to generate a single-strand break at the site of the removed base with both 3'- and 5'-phosphates. The polypeptide is Formamidopyrimidine-DNA glycosylase (Bradyrhizobium sp. (strain ORS 278)).